The following is a 629-amino-acid chain: tRNA uridine 5-carboxymethylaminomethyl modification enzyme MnmG (629 aa).

FAD-binding positions include 13-18 (GGGHAG), Val-125, and Ser-180. 273 to 287 (GPRYCPSIEDKVMRF) contributes to the NAD(+) binding site. Position 370 (Gln-370) interacts with FAD.

Belongs to the MnmG family. Homodimer. Heterotetramer of two MnmE and two MnmG subunits. The cofactor is FAD.

The protein localises to the cytoplasm. Functionally, NAD-binding protein involved in the addition of a carboxymethylaminomethyl (cmnm) group at the wobble position (U34) of certain tRNAs, forming tRNA-cmnm(5)s(2)U34. This Cronobacter sakazakii (strain ATCC BAA-894) (Enterobacter sakazakii) protein is tRNA uridine 5-carboxymethylaminomethyl modification enzyme MnmG.